A 581-amino-acid chain; its full sequence is Potassium-transporting ATPase potassium-binding subunit (581 aa).

12 helical membrane passes run 2 to 22 (LQGW…TPFF), 74 to 94 (AVIA…PLNP), 135 to 155 (GLGY…IAFI), 177 to 197 (ILLP…VPET), 255 to 275 (LVQL…YGVF), 284 to 304 (LIYL…AIGE), 332 to 352 (WAQS…AVIA), 357 to 377 (LMPN…VFGG), 381 to 401 (GTAY…LMVG), 421 to 441 (FLIL…ALAF), 501 to 521 (LSAC…LLLL), and 550 to 570 (AGVI…LGPI).

The protein belongs to the KdpA family. The system is composed of three essential subunits: KdpA, KdpB and KdpC.

It is found in the cell inner membrane. Its function is as follows. Part of the high-affinity ATP-driven potassium transport (or Kdp) system, which catalyzes the hydrolysis of ATP coupled with the electrogenic transport of potassium into the cytoplasm. This subunit binds the periplasmic potassium ions and delivers the ions to the membrane domain of KdpB through an intramembrane tunnel. The sequence is that of Potassium-transporting ATPase potassium-binding subunit from Microcystis aeruginosa (strain NIES-843 / IAM M-2473).